Consider the following 89-residue polypeptide: Small ribosomal subunit protein uS15 (89 aa).

It belongs to the universal ribosomal protein uS15 family. In terms of assembly, part of the 30S ribosomal subunit. Forms a bridge to the 50S subunit in the 70S ribosome, contacting the 23S rRNA.

Functionally, one of the primary rRNA binding proteins, it binds directly to 16S rRNA where it helps nucleate assembly of the platform of the 30S subunit by binding and bridging several RNA helices of the 16S rRNA. Its function is as follows. Forms an intersubunit bridge (bridge B4) with the 23S rRNA of the 50S subunit in the ribosome. The sequence is that of Small ribosomal subunit protein uS15 from Trichormus variabilis (strain ATCC 29413 / PCC 7937) (Anabaena variabilis).